We begin with the raw amino-acid sequence, 66 residues long: SPbeta prophage-derived uncharacterized protein YosK (66 aa).

This is SPbeta prophage-derived uncharacterized protein YosK (yosK) from Bacillus subtilis (strain 168).